The primary structure comprises 209 residues: Large ribosomal subunit protein uL3 (209 aa).

Gln-150 bears the N5-methylglutamine mark.

This sequence belongs to the universal ribosomal protein uL3 family. Part of the 50S ribosomal subunit. Forms a cluster with proteins L14 and L19. Post-translationally, methylated by PrmB.

In terms of biological role, one of the primary rRNA binding proteins, it binds directly near the 3'-end of the 23S rRNA, where it nucleates assembly of the 50S subunit. This chain is Large ribosomal subunit protein uL3, found in Pasteurella multocida (strain Pm70).